A 928-amino-acid chain; its full sequence is DENN domain-containing protein 2C (928 aa).

Disordered regions lie at residues 67–105 (KSKN…YDDT) and 245–266 (QSSL…IRGR). Residues 85–105 (ENTKSHDQSENENKKHEYDDT) show a composition bias toward basic and acidic residues. Serine 271 bears the Phosphoserine mark. Positions 428-456 (KLHSYTGKELPPTKGETSGNESDAEYLPK) are disordered. Residues 492-641 (ELFVVVSLQK…PFPAPGRTIT (150 aa)) form the uDENN domain. The cDENN domain occupies 663-796 (RLEHVDFKCL…LQAALMQILE (134 aa)). Residues 798–888 (RNEILTQEQN…QDRELRKSGV (91 aa)) enclose the dDENN domain.

Guanine nucleotide exchange factor (GEF) which may activate RAB9A and RAB9B. Promotes the exchange of GDP to GTP, converting inactive GDP-bound Rab proteins into their active GTP-bound form. The polypeptide is DENN domain-containing protein 2C (DENND2C) (Homo sapiens (Human)).